Here is a 311-residue protein sequence, read N- to C-terminus: Glycerol-3-phosphate dehydrogenase [NAD(P)+] (311 aa).

4 residues coordinate NADPH: W12, R31, R32, and K96. Sn-glycerol 3-phosphate-binding residues include K96, G124, and S126. Residue A128 participates in NADPH binding. Sn-glycerol 3-phosphate contacts are provided by K178, D231, S241, R242, and N243. Residue K178 is the Proton acceptor of the active site. R242 is a binding site for NADPH. NADPH is bound by residues V266 and E268.

The protein belongs to the NAD-dependent glycerol-3-phosphate dehydrogenase family.

The protein resides in the cytoplasm. It carries out the reaction sn-glycerol 3-phosphate + NAD(+) = dihydroxyacetone phosphate + NADH + H(+). The enzyme catalyses sn-glycerol 3-phosphate + NADP(+) = dihydroxyacetone phosphate + NADPH + H(+). It participates in membrane lipid metabolism; glycerophospholipid metabolism. Functionally, catalyzes the reduction of the glycolytic intermediate dihydroxyacetone phosphate (DHAP) to sn-glycerol 3-phosphate (G3P), the key precursor for phospholipid synthesis. This is Glycerol-3-phosphate dehydrogenase [NAD(P)+] from Helicobacter hepaticus (strain ATCC 51449 / 3B1).